The following is a 496-amino-acid chain: 7,8-epoxymelianol synthase CYP88A154 (496 aa).

The helical transmembrane segment at 11 to 31 (FNFLWLILAIFVGTYVVLFGF) threads the bilayer. Cys444 is a binding site for heme.

This sequence belongs to the cytochrome P450 family. It depends on heme as a cofactor.

The protein localises to the membrane. The enzyme catalyses melianol + reduced [NADPH--hemoprotein reductase] + O2 = 7,8-epoxymelianol + oxidized [NADPH--hemoprotein reductase] + H2O + H(+). The protein operates within secondary metabolite biosynthesis; terpenoid biosynthesis. Functionally, monooxygenase involved in the biosynthesis of glabretanes, limonoids and quassinoids triterpene natural products such as ailanthone, chaparrinone, glaucarubinone and amarolide, allelopathic degraded triterpene lactones inhibiting the growth of other plants, and possessing antimalarial, antifeedant, insecticidal, anti-inflammatory and anticancer activities. Catalyzes the epoxidation of melianol to produce 7,8-epoxymelianol. The chain is 7,8-epoxymelianol synthase CYP88A154 from Ailanthus altissima (Tree-of-heaven).